The following is a 432-amino-acid chain: Repulsive guidance molecule A (432 aa).

Residues 1 to 29 (MGRGAGSTALGLFQILPVFLCIFPPVTSP) form the signal peptide. The propeptide at 30–149 (CKILKCNSEF…NYTHCGLFGD (120 aa)) is removed in mature form. N-linked (GlcNAc...) asparagine glycosylation is present at asparagine 96. Residues 99–122 (KDGPTSQPRLRTLPPGDSQERSDS) form a disordered region. Cystine bridges form between cysteine 126–cysteine 207 and cysteine 144–cysteine 296. A glycan (N-linked (GlcNAc...) asparagine) is linked at asparagine 140. The GPI-anchor amidated asparagine moiety is linked to residue asparagine 404. Positions 405-432 (AAPSEHPWALPALWVALLSLSQCWLGLL) are cleaved as a propeptide — removed in mature form.

The protein belongs to the repulsive guidance molecule (RGM) family. Autocatalytically cleaved at low pH; the two chains remain linked via two disulfide bonds.

Its subcellular location is the cell membrane. Its function is as follows. Acts as an axon-specific repulsive guidance molecule in the retinotectal system. Repulsive for a subset of axons of the temporal half of the retina. Provides thus positional information for the temporal axons invading the optic tectum in the stratum opticum. The sequence is that of Repulsive guidance molecule A (RGMA) from Gallus gallus (Chicken).